The sequence spans 101 residues: Floral defensin-like protein 2 (101 aa).

Residues 1–25 (MARSICFFAVAILALMLFAAYETEA) form the signal peptide. Cystine bridges form between C28–C74, C32–C48, C39–C61, C45–C68, and C49–C70. A propeptide spans 75–101 (ATEEATATLANEVKTMAEALVEEDMME) (removed in mature form).

This sequence belongs to the DEFL family. When compared to other plant defensins, the petunia defensins have an additional fifth disulfide bond. In terms of tissue distribution, petals.

The protein resides in the secreted. The protein localises to the vacuole. In terms of biological role, plant defense peptide with antifungal activity against F.oxysporum and B.cinerea. This is Floral defensin-like protein 2 (D2) from Petunia hybrida (Petunia).